The primary structure comprises 369 residues: Anhydro-N-acetylmuramic acid kinase (369 aa).

12–19 is an ATP binding site; it reads GTSMDGVD.

Belongs to the anhydro-N-acetylmuramic acid kinase family.

It carries out the reaction 1,6-anhydro-N-acetyl-beta-muramate + ATP + H2O = N-acetyl-D-muramate 6-phosphate + ADP + H(+). It participates in amino-sugar metabolism; 1,6-anhydro-N-acetylmuramate degradation. Its pathway is cell wall biogenesis; peptidoglycan recycling. In terms of biological role, catalyzes the specific phosphorylation of 1,6-anhydro-N-acetylmuramic acid (anhMurNAc) with the simultaneous cleavage of the 1,6-anhydro ring, generating MurNAc-6-P. Is required for the utilization of anhMurNAc either imported from the medium or derived from its own cell wall murein, and thus plays a role in cell wall recycling. This is Anhydro-N-acetylmuramic acid kinase from Shewanella baltica (strain OS185).